A 404-amino-acid polypeptide reads, in one-letter code: Multidrug resistance protein MdtG (404 aa).

A run of 11 helical transmembrane segments spans residues 19-39 (LGCFLTGAAFSLVMPFLPLYV), 56-76 (LVFSITFLFSAIASPFWGGLA), 90-110 (LGMAIVMLLMGMAQNIWQFLI), 113-133 (ALLGLLGGFILNANALIATQV), 144-164 (TLSTGGVSGALLGPLAGGLLA), 171-191 (PVFFITASVLFICFLLTFFFI), 222-242 (LFVTTLIIQVATGSIAPILTL), 254-274 (IAFISGMIASVPGVAALLSAP), 288-308 (ILIVALIISVLLLIPMSFVQT), 317-337 (FLLGAADGALLPAVQTLLVYN), and 376-396 (AVFCVTAGVVLFNAIYSWNSL).

The protein belongs to the major facilitator superfamily. DHA1 family. MdtG (TC 2.A.1.2.20) subfamily.

It localises to the cell inner membrane. The protein is Multidrug resistance protein MdtG of Salmonella choleraesuis (strain SC-B67).